The following is a 590-amino-acid chain: 2-isopropylmalate synthase (590 aa).

One can recognise a Pyruvate carboxyltransferase domain in the interval 40-314 (PRWCAVDLRD…DPQIDFSDID (275 aa)). Residues Asp49, His253, His255, and Asn289 each contribute to the Mg(2+) site. A regulatory domain region spans residues 456–590 (APETESDAKW…SSVPAELAGV (135 aa)).

Belongs to the alpha-IPM synthase/homocitrate synthase family. LeuA type 2 subfamily. Homodimer. It depends on Mg(2+) as a cofactor.

It is found in the cytoplasm. It carries out the reaction 3-methyl-2-oxobutanoate + acetyl-CoA + H2O = (2S)-2-isopropylmalate + CoA + H(+). Its pathway is amino-acid biosynthesis; L-leucine biosynthesis; L-leucine from 3-methyl-2-oxobutanoate: step 1/4. Functionally, catalyzes the condensation of the acetyl group of acetyl-CoA with 3-methyl-2-oxobutanoate (2-ketoisovalerate) to form 3-carboxy-3-hydroxy-4-methylpentanoate (2-isopropylmalate). This Leifsonia xyli subsp. xyli (strain CTCB07) protein is 2-isopropylmalate synthase.